The chain runs to 1037 residues: Exportin-T (1037 aa).

This sequence belongs to the exportin family.

It localises to the nucleus. Its subcellular location is the cytoplasm. TRNA nucleus export receptor which facilitates tRNA translocation across the nuclear pore complex. Involved in pre-tRNA splicing, probably by affecting the interaction of pre-tRNA with splicing endonuclease. This Neosartorya fischeri (strain ATCC 1020 / DSM 3700 / CBS 544.65 / FGSC A1164 / JCM 1740 / NRRL 181 / WB 181) (Aspergillus fischerianus) protein is Exportin-T (los1).